A 631-amino-acid chain; its full sequence is Forkhead box protein O1 (631 aa).

Residues 1-11 are compositionally biased toward pro residues; that stretch reads MAEAPQPPPPL. Disordered stretches follow at residues 1–57, 90–147, 223–324, and 372–404; these read MAEA…PAAG, DIRQ…SRRN, SSWW…MPEQ, and PNSS…PNSE. Composition is skewed to low complexity over residues 37–48 and 100–135; these read NPSSSANSSPAP and QQQQ…PLGA. The fork-head DNA-binding region spans 149–243; the sequence is WGNLSYADLI…KNGKSPRRRA (95 aa). A compositionally biased stretch (basic residues) spans 253-264; it reads AKSRGRAAKKKA. Residues 265–282 are compositionally biased toward low complexity; the sequence is SMQSSQDGSSDSPGSQFS. Composition is skewed to polar residues over residues 303–315 and 381–403; these read RPRT…TISG and ASMM…SPNS.

Post-translationally, phosphorylated by AKT1; insulin-induced. IGF1 rapidly induces phosphorylation of Thr-28, Ser-245 and Ser-308. Phosphorylation of Ser-245 decreases DNA-binding activity and promotes the phosphorylation of Thr-28, and Ser-308, which leads to nuclear exclusion and loss of function. Phosphorylation of Ser-318 is independent of IGF1 and leads to reduced function. As to expression, localized to the animal hemisphere during early cleavage stages. At early tadpole stages, expressed in the branchial arches, pronephros and liver. Within the head, expressed in the forming thyroid gland and in head mesenchyme anterior to the eyes.

The protein localises to the cytoplasm. It localises to the nucleus. Transcription factor that regulates metabolic homeostasis in response to oxidative stress. Binds to the consensus sequence 5'-TT[G/A]TTTTG-3' and the related Daf-16 family binding element (DBE) with consensus sequence 5'-TT[G/A]TTTAC-3'. Main regulator of redox balance and osteoblast numbers and controls bone mass. Orchestrates the endocrine function of the skeleton in regulating glucose metabolism. Also acts as a key regulator of chondrogenic commitment of skeletal progenitor cells in response to lipid availability: when lipids levels are low, translocates to the nucleus and promotes expression of sox9, which induces chondrogenic commitment and suppresses fatty acid oxidation. Acts synergistically with atf4 to suppress osteocalcin/bglap activity, increasing glucose levels and triggering glucose intolerance and insulin insensitivity. Also suppresses the transcriptional activity of runx2, an upstream activator of osteocalcin/bglap. May act as a positive regulator of apoptosis in cardiac smooth muscle cells as a result of its transcriptional activation of pro-apoptotic genes. In Xenopus laevis (African clawed frog), this protein is Forkhead box protein O1.